We begin with the raw amino-acid sequence, 430 residues long: Sorting nexin-4 (430 aa).

The segment covering 1–18 has biased composition (polar residues); it reads MDSASADASVTGSGNAKG. The tract at residues 1–22 is disordered; that stretch reads MDSASADASVTGSGNAKGSSAE. A PX domain is found at 33–162; that stretch reads LEILVSDPQK…IFLVGNEWDT (130 aa). 3 residues coordinate a 1,2-diacyl-sn-glycero-3-phospho-(1D-myo-inositol-3-phosphate): Arg-83, Lys-109, and Arg-128. Residues 351-414 adopt a coiled-coil conformation; the sequence is ASRRDKINKL…NNLADENIKF (64 aa).

The protein belongs to the sorting nexin family.

The protein localises to the cytoplasm. It is found in the cytosol. It localises to the preautophagosomal structure membrane. Its subcellular location is the endosome membrane. Functionally, sorting nexin, involved in the separation or division of vacuoles throughout the entire life cycle of the cells. Involved in retrieval of late-Golgi SNAREs from post-Golgi endosomes to the trans-Golgi network, for cytoplasm to vacuole transport (Cvt), and autophagy of large cargos including mitophagy, pexophagy and glycophagy. This is Sorting nexin-4 (SNX4) from Candida glabrata (strain ATCC 2001 / BCRC 20586 / JCM 3761 / NBRC 0622 / NRRL Y-65 / CBS 138) (Yeast).